The chain runs to 341 residues: MRVGVLTGGGDCPGLNAVIRAVVRKGIEAHGWEIVGFRSGWRGPLTGDSRPLGLDDVEEILIRGGTILGSSRTNPYKEEGGVEKIRAVLADQGVDALIAIGGEDTLGVAKKLTDDGIGVVGVPKTIDNDLAATDYTFGFDTAVHIATEAIDRLRTTAESHYRAMVVEVMGRHAGWIALHAGLAGGANVILVPERPFSVEQVVEWVERRFEKMYAPIIVVAEGAVPEGGAEVLRTGEKDAFGHVQLGGVGTWLADEIAERTGKESRAVVLGHTQRGGTPTAYDRVLATRFGLHAVDAVADGDFGTMVALRGTDIVRVKLAEATAELKTVPPERYEEAEVFFG.

G10 lines the diphosphate pocket. E103 contributes to the Mg(2+) binding site. Substrate is bound by residues 125 to 127, R162, 169 to 171, E221, R265, and 271 to 274; these read TID, MGR, and HTQR. D127 (proton acceptor) is an active-site residue.

It belongs to the phosphofructokinase type A (PFKA) family. Mixed-substrate PFK group III subfamily. In terms of assembly, homotetramer. The cofactor is Mg(2+).

It localises to the cytoplasm. It catalyses the reaction beta-D-fructose 6-phosphate + diphosphate = beta-D-fructose 1,6-bisphosphate + phosphate + H(+). Its pathway is carbohydrate degradation; glycolysis; D-glyceraldehyde 3-phosphate and glycerone phosphate from D-glucose: step 3/4. Non-allosteric. Functionally, catalyzes the phosphorylation of D-fructose 6-phosphate, the first committing step of glycolysis. Uses inorganic phosphate (PPi) as phosphoryl donor instead of ATP like common ATP-dependent phosphofructokinases (ATP-PFKs), which renders the reaction reversible, and can thus function both in glycolysis and gluconeogenesis. Consistently, PPi-PFK can replace the enzymes of both the forward (ATP-PFK) and reverse (fructose-bisphosphatase (FBPase)) reactions. The sequence is that of Pyrophosphate--fructose 6-phosphate 1-phosphotransferase from Amycolatopsis methanolica.